The chain runs to 536 residues: Chaperonin GroEL (536 aa).

ATP is bound by residues 29 to 32 (TLGP), 86 to 90 (DGTTT), Gly-412, and Asp-493.

The protein belongs to the chaperonin (HSP60) family. In terms of assembly, forms a cylinder of 14 subunits composed of two heptameric rings stacked back-to-back. Interacts with the co-chaperonin GroES.

The protein localises to the cytoplasm. The enzyme catalyses ATP + H2O + a folded polypeptide = ADP + phosphate + an unfolded polypeptide.. Its function is as follows. Together with its co-chaperonin GroES, plays an essential role in assisting protein folding. The GroEL-GroES system forms a nano-cage that allows encapsulation of the non-native substrate proteins and provides a physical environment optimized to promote and accelerate protein folding. The sequence is that of Chaperonin GroEL from Aster yellows witches'-broom phytoplasma (strain AYWB).